A 374-amino-acid polypeptide reads, in one-letter code: UPF0674 endoplasmic reticulum membrane protein C2G5.01 (374 aa).

A helical membrane pass occupies residues 49–68; sequence FRLEFVILACFFLYVFSFIT. N-linked (GlcNAc...) asparagine glycosylation occurs at asparagine 287. The segment at 335–374 is disordered; that stretch reads KAAKKKVKSSGDISKLSESDQKKRMERERQRKMRRRAKKM. Residues 349 to 363 show a composition bias toward basic and acidic residues; the sequence is KLSESDQKKRMERER. A compositionally biased stretch (basic residues) spans 364–374; the sequence is QRKMRRRAKKM.

It belongs to the UPF0674 family.

It is found in the endoplasmic reticulum membrane. This is UPF0674 endoplasmic reticulum membrane protein C2G5.01 from Schizosaccharomyces pombe (strain 972 / ATCC 24843) (Fission yeast).